Consider the following 502-residue polypeptide: MFS-type transporeter aprT (502 aa).

The interval 1-38 (MASPELASHHSDPSDGEGAPFLPGVDDESPESLNSDIP) is disordered. Transmembrane regions (helical) follow at residues 45-65 (HGLIIKLFVIYLAIGMGGPMI), 114-136 (IGYREFFNAFLTSTFALPYGLLA), 150-170 (VGFVFNSVLSFAPIWLPNIFP), 175-195 (WFGAVGWVLGGGPVLLFALFW), 214-234 (FGIATVSAGFLANVTSSFVMK), 239-259 (VPLMTGCGLLFAGLLVANLLP), 302-322 (VAVILPAFFVTQLAGGSAFLV), 336-356 (ATLLVALQHAFTIPVLFFILP), 380-400 (VMLLALGLFGIGLSSSINTLI), 403-423 (LLLHAGGAGFVLIARGLITGL), and 464-484 (LWIGLPWLIVSFLLALIALVL). Asn495 carries N-linked (GlcNAc...) asparagine glycosylation.

The protein belongs to the major facilitator superfamily.

Its subcellular location is the cell membrane. Functionally, MFS-rype transporer; part of the gene cluster that mediates the biosynthesis of the asperipin-2a, a bicyclic peptide that possesses two macrocyclic ether rings consisting of 14- and 17-membered paracyclophans. AprT is likely to be involved in the cellular export of asperipin-2a. The sequence is that of MFS-type transporeter aprT from Aspergillus flavus (strain ATCC 200026 / FGSC A1120 / IAM 13836 / NRRL 3357 / JCM 12722 / SRRC 167).